Consider the following 241-residue polypeptide: Probable transcriptional regulatory protein NE0210 (241 aa).

It belongs to the TACO1 family.

It is found in the cytoplasm. The protein is Probable transcriptional regulatory protein NE0210 of Nitrosomonas europaea (strain ATCC 19718 / CIP 103999 / KCTC 2705 / NBRC 14298).